The sequence spans 181 residues: Protein Syd (181 aa).

It belongs to the Syd family.

It is found in the cell inner membrane. Its function is as follows. Interacts with the SecY protein in vivo. May bind preferentially to an uncomplexed state of SecY, thus functioning either as a chelating agent for excess SecY in the cell or as a regulatory factor that negatively controls the translocase function. The polypeptide is Protein Syd (Shigella flexneri).